The sequence spans 254 residues: Cell division protein FtsQ (254 aa).

At 1 to 27 (MNILKRKTPQNIRFGEQKPKYYFHIRA) the chain is on the cytoplasmic side. A helical transmembrane segment spans residues 28–48 (FAVLLGVFFLLGVYFNWQSIL). Topologically, residues 49–254 (EKMDDKPISA…AGAAVGMVDR (206 aa)) are periplasmic. Residues 54 to 124 (KPISAFALVG…NRLSIWVSEY (71 aa)) enclose the POTRA domain.

It belongs to the FtsQ/DivIB family. FtsQ subfamily. In terms of assembly, part of a complex composed of FtsB, FtsL and FtsQ.

The protein localises to the cell inner membrane. Functionally, essential cell division protein. May link together the upstream cell division proteins, which are predominantly cytoplasmic, with the downstream cell division proteins, which are predominantly periplasmic. May control correct divisome assembly. The sequence is that of Cell division protein FtsQ from Haemophilus influenzae (strain ATCC 51907 / DSM 11121 / KW20 / Rd).